The chain runs to 294 residues: Non-selective voltage-gated ion channel VDAC2 (294 aa).

Alanine 2 carries the post-translational modification N-acetylalanine. Positions 23 and 31 each coordinate ATP. Lysine 31 is modified (N6-acetyllysine; alternate). An N6-succinyllysine; alternate modification is found at lysine 31. Lysine 31 is covalently cross-linked (Glycyl lysine isopeptide (Lys-Gly) (interchain with G-Cter in ubiquitin); alternate). The next 2 membrane-spanning stretches (beta stranded) occupy residues 37-46 and 50-58; these read LVKLDVKTKS and VEFSTSGSS. A Glycyl lysine isopeptide (Lys-Gly) (interchain with G-Cter in ubiquitin) cross-link involves residue lysine 64. Residues 65–75 form a beta stranded membrane-spanning segment; that stretch reads VTGTLETKYKW. Tyrosine 78 is subject to Phosphotyrosine. The next 3 beta stranded transmembrane spans lie at 80–87, 91–100, and 106–115; these read LTFTEKWN, TLGTEIAIED, and LKLTFDTTFS. Phosphothreonine is present on threonine 118. Lysine 120 carries the post-translational modification N6-acetyllysine; alternate. Lysine 120 participates in a covalent cross-link: Glycyl lysine isopeptide (Lys-Gly) (interchain with G-Cter in ubiquitin); alternate. A Glycyl lysine isopeptide (Lys-Gly) (interchain with G-Cter in ubiquitin) cross-link involves residue lysine 121. 4 beta stranded membrane passes run 122–131, 134–141, 148–156, and 161–169; these read SGKIKSSYKR, VNLGCDVD, AIHGSAVFG, and LAGYQMTFD. Residue lysine 172 forms a Glycyl lysine isopeptide (Lys-Gly) (interchain with G-Cter in ubiquitin) linkage. A run of 6 beta stranded transmembrane segments spans residues 174–186, 189–196, 200–209, 213–222, 229–238, and 242–249; these read KLTR…GYRT, FQLHTNVN, EFGGSIYQKV, LDTSVNLAWT, RFGIAAKYQL, and ASISAKVN. Phosphoserine is present on serine 251. Residues 253 to 255 and 271 to 275 contribute to the NAD(+) site; these read LIG and SALVD. Transmembrane regions (beta stranded) follow at residues 253 to 262 and 265 to 274; these read LIGVGYTQTL and GVKLTLSALV. Position 277 is an N6-acetyllysine; alternate (lysine 277). Residue lysine 277 forms a Glycyl lysine isopeptide (Lys-Gly) (interchain with G-Cter in ubiquitin); alternate linkage. A beta stranded membrane pass occupies residues 284 to 293; sequence HKLGLALELE.

Belongs to the eukaryotic mitochondrial porin family. Monomer, homodimer and higher order oligomers; formation of higher order structures is necessary for scramblase activity. Interacts with ARMC12 in a TBC1D21-dependent manner. Interacts with KLC3. Interacts with SPATA33. Interacts with PPP3CC in a SPATA33-dependent manner. Ubiquitinated by PRKN during mitophagy, leading to its degradation and enhancement of mitophagy. Deubiquitinated by USP30.

Its subcellular location is the mitochondrion outer membrane. It is found in the membrane. It carries out the reaction chloride(in) = chloride(out). It catalyses the reaction K(+)(in) = K(+)(out). The enzyme catalyses a 1,2-diacyl-sn-glycero-3-phospho-L-serine(in) = a 1,2-diacyl-sn-glycero-3-phospho-L-serine(out). The catalysed reaction is a 1,2-diacyl-sn-glycero-3-phosphocholine(in) = a 1,2-diacyl-sn-glycero-3-phosphocholine(out). It carries out the reaction a 1,2-diacyl-sn-glycero-3-phospho-(1D-myo-inositol)(in) = a 1,2-diacyl-sn-glycero-3-phospho-(1D-myo-inositol)(out). Functionally, non-selective voltage-gated ion channel that mediates the transport of anions and cations through the mitochondrion outer membrane and plasma membrane. The channel adopts an open conformation at zero mV and a closed conformation at both positive and negative potentials. There are two populations of channels; the main that functions in a lower open-state conductance with lower ion selectivity, that switch, in a voltage-dependent manner, from the open to a low-conducting 'closed' state and the other that has a normal ion selectivity in the typical high conductance, 'open' state. Binds various lipids, including the sphingolipid ceramide, the phospholipid phosphatidylcholine, and the sterols cholesterol and oxysterol. Binding of ceramide promotes the mitochondrial outer membrane permeabilization (MOMP) apoptotic pathway. Its function is as follows. Catalyzes the scrambling of phospholipids across the outer mitochondrial membrane; the mechanism is unrelated to channel activity and is capable of translocating both anionic and zwitterionic phospholipids. This is Non-selective voltage-gated ion channel VDAC2 from Sus scrofa (Pig).